The chain runs to 330 residues: Phosphate acyltransferase (330 aa).

Belongs to the PlsX family. Homodimer. Probably interacts with PlsY.

The protein localises to the cytoplasm. It carries out the reaction a fatty acyl-[ACP] + phosphate = an acyl phosphate + holo-[ACP]. It functions in the pathway lipid metabolism; phospholipid metabolism. Its function is as follows. Catalyzes the reversible formation of acyl-phosphate (acyl-PO(4)) from acyl-[acyl-carrier-protein] (acyl-ACP). This enzyme utilizes acyl-ACP as fatty acyl donor, but not acyl-CoA. The chain is Phosphate acyltransferase from Bacillus cereus (strain G9842).